Consider the following 74-residue polypeptide: Small ribosomal subunit protein bS18 (74 aa).

Belongs to the bacterial ribosomal protein bS18 family. As to quaternary structure, part of the 30S ribosomal subunit. Forms a tight heterodimer with protein bS6.

Its function is as follows. Binds as a heterodimer with protein bS6 to the central domain of the 16S rRNA, where it helps stabilize the platform of the 30S subunit. The sequence is that of Small ribosomal subunit protein bS18 from Gloeobacter violaceus (strain ATCC 29082 / PCC 7421).